A 175-amino-acid polypeptide reads, in one-letter code: Microfibril-associated glycoprotein 3 (175 aa).

Topologically, residues 1-175 (FRTEGAEKLQ…KDGSFESCQL (175 aa)) are cytoplasmic. Positions 85 to 175 (KERPALNAQD…KDGSFESCQL (91 aa)) are disordered. Over residues 145 to 175 (QDSSHFSPPDDTGSTESNSNYKDGSFESCQL) the composition is skewed to polar residues.

Glycosylated.

It is found in the cell membrane. Component of the elastin-associated microfibrils. The chain is Microfibril-associated glycoprotein 3 (MFAP3) from Bos taurus (Bovine).